We begin with the raw amino-acid sequence, 434 residues long: GPI mannosyltransferase 2 (434 aa).

The next 10 membrane-spanning stretches (helical) occupy residues Leu22–Gly42, Ile109–Ala129, Gly145–Leu165, Gly170–Leu190, Leu210–Phe230, Leu252–Ile272, Tyr311–Cys331, Leu354–Ile374, Ile377–Ala397, and Ile411–Leu431.

The protein belongs to the PIGV family.

The protein localises to the endoplasmic reticulum membrane. The protein operates within glycolipid biosynthesis; glycosylphosphatidylinositol-anchor biosynthesis. Mannosyltransferase involved in glycosylphosphatidylinositol-anchor biosynthesis. Transfers the second mannose to the glycosylphosphatidylinositol during GPI precursor assembly. The chain is GPI mannosyltransferase 2 (gpi18) from Aspergillus oryzae (strain ATCC 42149 / RIB 40) (Yellow koji mold).